A 282-amino-acid polypeptide reads, in one-letter code: Pantothenate synthetase (282 aa).

30–37 is an ATP binding site; sequence MGYLHEGH. H37 (proton donor) is an active-site residue. Q61 contacts (R)-pantoate. Residue Q61 coordinates beta-alanine. 147 to 150 provides a ligand contact to ATP; the sequence is GMKD. Q153 provides a ligand contact to (R)-pantoate. ATP-binding positions include V176 and 184–187; that span reads KSSR.

Belongs to the pantothenate synthetase family. In terms of assembly, homodimer.

Its subcellular location is the cytoplasm. It catalyses the reaction (R)-pantoate + beta-alanine + ATP = (R)-pantothenate + AMP + diphosphate + H(+). The protein operates within cofactor biosynthesis; (R)-pantothenate biosynthesis; (R)-pantothenate from (R)-pantoate and beta-alanine: step 1/1. Its function is as follows. Catalyzes the condensation of pantoate with beta-alanine in an ATP-dependent reaction via a pantoyl-adenylate intermediate. This chain is Pantothenate synthetase, found in Bacillus mycoides (strain KBAB4) (Bacillus weihenstephanensis).